The following is a 624-amino-acid chain: Glyco-Gag protein (624 aa).

Topologically, residues 1–63 (LGDVPGTSGA…FLPSVWNRSR (63 aa)) are cytoplasmic. A helical membrane pass occupies residues 64-86 (AARLVCCSIVLCCLCLAVFLYWS). The Extracellular portion of the chain corresponds to 87–624 (ENMGQTVTTP…PQTSLLALDD (538 aa)). A glycan (N-linked (GlcNAc...) asparagine; by host) is linked at asparagine 113. Pro residues-rich tracts occupy residues 200 to 209 (PSLLPEPPLS) and 247 to 258 (DPPPYRDPGPPP). Disordered stretches follow at residues 200–284 (PSLL…ASRL) and 290–309 (LPVA…GGNG). An N-linked (GlcNAc...) asparagine; by host glycan is attached at asparagine 478. 2 stretches are compositionally biased toward basic and acidic residues: residues 520–552 (RETP…EKER) and 572–605 (KQDR…DCPK). The segment at 520-624 (RETPEEREER…PQTSLLALDD (105 aa)) is disordered.

Post-translationally, glycosylated by host. Cleaved by host near the middle of the molecule, releasing the c-terminal half containing capsid and nucleoprotein domains op GAG.

It localises to the host cell membrane. Plays a role in viral particle release. Presumably acts by facilitating the fission of the virion bud at the cell surface. May prevent the antiviral activity of murine APOBEC3. The polypeptide is Glyco-Gag protein (Mus musculus (Mouse)).